The primary structure comprises 95 residues: Co-chaperonin GroES (95 aa).

It belongs to the GroES chaperonin family. As to quaternary structure, heptamer of 7 subunits arranged in a ring. Interacts with the chaperonin GroEL.

The protein localises to the cytoplasm. Together with the chaperonin GroEL, plays an essential role in assisting protein folding. The GroEL-GroES system forms a nano-cage that allows encapsulation of the non-native substrate proteins and provides a physical environment optimized to promote and accelerate protein folding. GroES binds to the apical surface of the GroEL ring, thereby capping the opening of the GroEL channel. The protein is Co-chaperonin GroES of Jannaschia sp. (strain CCS1).